A 397-amino-acid chain; its full sequence is Transcription factor TGAL6 (397 aa).

Residues 104–148 (PDKVLRRLAQNREAARKSRLRKKAYIQQLETSRLKLAQLEQELQR) form the bZIP domain. Residues 106–126 (KVLRRLAQNREAARKSRLRKK) are basic motif. Residues 132–146 (LETSRLKLAQLEQEL) form a leucine-zipper region. In terms of domain architecture, DOG1 spans 175 to 390 (ALGFEIKYSH…RALSSLWAAR (216 aa)).

The protein belongs to the bZIP family.

It is found in the nucleus. In terms of biological role, transcriptional regulator involved in defense response. This is Transcription factor TGAL6 from Oryza sativa subsp. japonica (Rice).